Here is a 124-residue protein sequence, read N- to C-terminus: Small ribosomal subunit protein uS13 (124 aa).

Positions 95–124 (GLPVRGQRTHTNARTRKGPRRSVMGKRKKA) are disordered.

It belongs to the universal ribosomal protein uS13 family. As to quaternary structure, part of the 30S ribosomal subunit. Forms a loose heterodimer with protein S19. Forms two bridges to the 50S subunit in the 70S ribosome.

Its function is as follows. Located at the top of the head of the 30S subunit, it contacts several helices of the 16S rRNA. In the 70S ribosome it contacts the 23S rRNA (bridge B1a) and protein L5 of the 50S subunit (bridge B1b), connecting the 2 subunits; these bridges are implicated in subunit movement. Contacts the tRNAs in the A and P-sites. This is Small ribosomal subunit protein uS13 from Syntrophobacter fumaroxidans (strain DSM 10017 / MPOB).